The primary structure comprises 289 residues: Cysteine-rich venom protein Mr30 (289 aa).

The first 24 residues, 1-24 (MLSTMQTVGAILMLSIVFVAGTKR), serve as a signal peptide directing secretion. Glu33 carries the 4-carboxyglutamate modification. The region spanning 62-184 (VRMHNVIRAT…GEDRYFVCNY (123 aa)) is the SCP domain.

The protein belongs to the CRISP family. Post-translationally, contains 11 disulfide bonds. As to expression, expressed by the venom duct.

The protein resides in the secreted. Its function is as follows. Has no proteolytic activity. This chain is Cysteine-rich venom protein Mr30, found in Conus marmoreus (Marble cone).